Reading from the N-terminus, the 479-residue chain is Anaerobic nitric oxide reductase flavorubredoxin (479 aa).

The segment at Leu30–Ile210 is zinc metallo-hydrolase. 6 residues coordinate Fe cation: His79, Glu81, Asp83, His147, Asp166, and His227. The region spanning Ile254–Ala393 is the Flavodoxin-like domain. Residues Thr260–Asn264 and Ala342–Leu369 each bind FMN. In terms of domain architecture, Rubredoxin-like spans Gly423–Leu474. Positions 428, 431, 461, and 464 each coordinate Fe cation.

It in the N-terminal section; belongs to the zinc metallo-hydrolase group 3 family. In terms of assembly, homotetramer. Requires Fe cation as cofactor. FMN serves as cofactor.

It is found in the cytoplasm. Its pathway is nitrogen metabolism; nitric oxide reduction. Anaerobic nitric oxide reductase; uses NADH to detoxify nitric oxide (NO), protecting several 4Fe-4S NO-sensitive enzymes. Has at least 2 reductase partners, only one of which (NorW, flavorubredoxin reductase) has been identified. NO probably binds to the di-iron center; electrons enter from the NorW at rubredoxin and are transferred sequentially to the FMN center and the di-iron center. Also able to function as an aerobic oxygen reductase. The sequence is that of Anaerobic nitric oxide reductase flavorubredoxin from Escherichia coli (strain SMS-3-5 / SECEC).